The primary structure comprises 198 residues: ATP-dependent Clp protease proteolytic subunit (198 aa).

Ser98 (nucleophile) is an active-site residue. The active site involves His123.

It belongs to the peptidase S14 family. As to quaternary structure, fourteen ClpP subunits assemble into 2 heptameric rings which stack back to back to give a disk-like structure with a central cavity, resembling the structure of eukaryotic proteasomes.

The protein localises to the cytoplasm. It carries out the reaction Hydrolysis of proteins to small peptides in the presence of ATP and magnesium. alpha-casein is the usual test substrate. In the absence of ATP, only oligopeptides shorter than five residues are hydrolyzed (such as succinyl-Leu-Tyr-|-NHMec, and Leu-Tyr-Leu-|-Tyr-Trp, in which cleavage of the -Tyr-|-Leu- and -Tyr-|-Trp bonds also occurs).. Cleaves peptides in various proteins in a process that requires ATP hydrolysis. Has a chymotrypsin-like activity. Plays a major role in the degradation of misfolded proteins. This chain is ATP-dependent Clp protease proteolytic subunit, found in Ehrlichia ruminantium (strain Gardel).